The sequence spans 236 residues: Purine nucleoside phosphorylase DeoD-type (236 aa).

Residue histidine 5 coordinates a purine D-ribonucleoside. Residues glycine 21, arginine 25, arginine 44, and 88–91 (RIGS) contribute to the phosphate site. A purine D-ribonucleoside contacts are provided by residues 180–182 (EME) and 204–205 (SD). Catalysis depends on aspartate 205, which acts as the Proton donor.

The protein belongs to the PNP/UDP phosphorylase family. As to quaternary structure, homohexamer; trimer of homodimers.

The enzyme catalyses a purine D-ribonucleoside + phosphate = a purine nucleobase + alpha-D-ribose 1-phosphate. It carries out the reaction a purine 2'-deoxy-D-ribonucleoside + phosphate = a purine nucleobase + 2-deoxy-alpha-D-ribose 1-phosphate. Its function is as follows. Catalyzes the reversible phosphorolytic breakdown of the N-glycosidic bond in the beta-(deoxy)ribonucleoside molecules, with the formation of the corresponding free purine bases and pentose-1-phosphate. In Chromobacterium violaceum (strain ATCC 12472 / DSM 30191 / JCM 1249 / CCUG 213 / NBRC 12614 / NCIMB 9131 / NCTC 9757 / MK), this protein is Purine nucleoside phosphorylase DeoD-type.